An 815-amino-acid chain; its full sequence is Cell division cycle protein 48 (815 aa).

Positions 1–30 are disordered; that stretch reads MNAPSTMTDKKPEVEHLQGENPPKDTYSAE. Residues 8–18 are compositionally biased toward basic and acidic residues; the sequence is TDKKPEVEHLQ. Residues 267-273, asparagine 368, histidine 404, and 541-546 contribute to the ATP site; these read PGTGKTL and GTGKTL. Positions 794–815 are disordered; the sequence is DSADSNTNGPSFGNDGADDLYA. Residues 795 to 804 show a composition bias toward polar residues; that stretch reads SADSNTNGPS.

It belongs to the AAA ATPase family. Component of the ribosome quality control complex (RQC), composed of the E3 ubiquitin ligase rkr1/ltn1, rqc1 and mtr1/rqc2, as well as cdc48 and its ubiquitin-binding cofactors. RQC forms a stable complex with 60S ribosomal subunits. Interacts with ubx2 and ubx3. Interacts with lub1. Interacts with rbd2 (via C-terminal SHP box); the interaction is required for rbd2-mediated cleavage of sre1 and sre2.

Its subcellular location is the cytoplasm. It is found in the nucleus. The enzyme catalyses ATP + H2O = ADP + phosphate + H(+). The first ATP-binding region has low ATPase activity. The second ATP-binding region is responsible for ATPase activity. ATP binding to the first ATP-binding region induces intrinsic activity of the second ATP-binding region. While ATP binding to the first ATP-binding region appears to prevent ATP hydrolysis by the second ATP-binding region, ADP-binding to first region promotes the coordinate and cooperative ATPase cycle of the second ATP-binding region. ATP binding to the first ATP-binding region induces a conformational change, promoting the rotation of the first ATP-binding region relative to the second ATP-binding region in the hexamer. In terms of biological role, ATP-dependent chaperone which probably uses the energy provided by ATP hydrolysis to generate mechanical force to unfold substrate proteins, disassemble protein complexes, and disaggregate protein aggregates. By recruiting and promoting the degradation of ubiquitinated proteins, plays a role in the ubiquitin fusion degradation (UFD) pathway. Has a role in the endoplasmic reticulum-associated degradation (ERAD) pathway which mediates the cytoplasmic elimination of misfolded proteins exported from the ER. Involved in spindle disassembly. Component of the ribosome quality control complex (RQC), a ribosome-associated complex that mediates ubiquitination and extraction of incompletely synthesized nascent chains for proteasomal degradation. CDC48 may provide the mechanical force that dislodges the polyubiquitinated nascent peptides from the exit channel. Required for ribophagy, a process which relocalizes ribosomal particles into the vacuole for degradation in response to starvation. Has a role in substrate recognition mediating rbd2-dependent cleavage of sterol regulatory element-binding protein sre1 and sre2. This chain is Cell division cycle protein 48, found in Schizosaccharomyces pombe (strain 972 / ATCC 24843) (Fission yeast).